Consider the following 141-residue polypeptide: Putative pre-16S rRNA nuclease (141 aa).

This sequence belongs to the YqgF nuclease family.

It localises to the cytoplasm. Could be a nuclease involved in processing of the 5'-end of pre-16S rRNA. The polypeptide is Putative pre-16S rRNA nuclease (Shewanella denitrificans (strain OS217 / ATCC BAA-1090 / DSM 15013)).